The following is a 445-amino-acid chain: tRNA modification GTPase MnmE (445 aa).

Residues Arg20, Glu79, and Lys119 each contribute to the (6S)-5-formyl-5,6,7,8-tetrahydrofolate site. A TrmE-type G domain is found at 215 to 371 (GLKLAIVGPP…ILKNIENIAE (157 aa)). Asn225 contacts K(+). Residues 225 to 230 (NTGKSS), 244 to 250 (SNIAGTT), and 269 to 272 (DTAG) contribute to the GTP site. Ser229 is a binding site for Mg(2+). The K(+) site is built by Ser244, Ile246, and Thr249. Thr250 provides a ligand contact to Mg(2+). Lys445 lines the (6S)-5-formyl-5,6,7,8-tetrahydrofolate pocket.

The protein belongs to the TRAFAC class TrmE-Era-EngA-EngB-Septin-like GTPase superfamily. TrmE GTPase family. As to quaternary structure, homodimer. Heterotetramer of two MnmE and two MnmG subunits. K(+) serves as cofactor.

The protein resides in the cytoplasm. In terms of biological role, exhibits a very high intrinsic GTPase hydrolysis rate. Involved in the addition of a carboxymethylaminomethyl (cmnm) group at the wobble position (U34) of certain tRNAs, forming tRNA-cmnm(5)s(2)U34. The protein is tRNA modification GTPase MnmE of Rickettsia akari (strain Hartford).